The chain runs to 468 residues: Glutamate--tRNA ligase (468 aa).

Residues 9 to 19 (PSPTGSIHIGN) carry the 'HIGH' region motif. Residues 239–243 (KLSKR) carry the 'KMSKS' region motif. Residue lysine 242 coordinates ATP.

This sequence belongs to the class-I aminoacyl-tRNA synthetase family. Glutamate--tRNA ligase type 1 subfamily. Monomer.

The protein localises to the cytoplasm. The enzyme catalyses tRNA(Glu) + L-glutamate + ATP = L-glutamyl-tRNA(Glu) + AMP + diphosphate. In terms of biological role, catalyzes the attachment of glutamate to tRNA(Glu) in a two-step reaction: glutamate is first activated by ATP to form Glu-AMP and then transferred to the acceptor end of tRNA(Glu). This is Glutamate--tRNA ligase from Blochmanniella pennsylvanica (strain BPEN).